A 343-amino-acid chain; its full sequence is Biotin synthase (343 aa).

One can recognise a Radical SAM core domain in the interval Asn64 to Arg291. [4Fe-4S] cluster is bound by residues Cys79, Cys83, and Cys86. 4 residues coordinate [2Fe-2S] cluster: Cys123, Cys154, Cys214, and Arg286.

The protein belongs to the radical SAM superfamily. Biotin synthase family. As to quaternary structure, homodimer. It depends on [4Fe-4S] cluster as a cofactor. [2Fe-2S] cluster is required as a cofactor.

The enzyme catalyses (4R,5S)-dethiobiotin + (sulfur carrier)-SH + 2 reduced [2Fe-2S]-[ferredoxin] + 2 S-adenosyl-L-methionine = (sulfur carrier)-H + biotin + 2 5'-deoxyadenosine + 2 L-methionine + 2 oxidized [2Fe-2S]-[ferredoxin]. It participates in cofactor biosynthesis; biotin biosynthesis; biotin from 7,8-diaminononanoate: step 2/2. In terms of biological role, catalyzes the conversion of dethiobiotin (DTB) to biotin by the insertion of a sulfur atom into dethiobiotin via a radical-based mechanism. In Cupriavidus necator (strain ATCC 17699 / DSM 428 / KCTC 22496 / NCIMB 10442 / H16 / Stanier 337) (Ralstonia eutropha), this protein is Biotin synthase.